Consider the following 211-residue polypeptide: N-(5'-phosphoribosyl)anthranilate isomerase (211 aa).

This sequence belongs to the TrpF family.

It catalyses the reaction N-(5-phospho-beta-D-ribosyl)anthranilate = 1-(2-carboxyphenylamino)-1-deoxy-D-ribulose 5-phosphate. It functions in the pathway amino-acid biosynthesis; L-tryptophan biosynthesis; L-tryptophan from chorismate: step 3/5. The sequence is that of N-(5'-phosphoribosyl)anthranilate isomerase from Methanococcus maripaludis (strain DSM 14266 / JCM 13030 / NBRC 101832 / S2 / LL).